A 260-amino-acid chain; its full sequence is Cytochrome c1-2, heme protein, mitochondrial (260 aa).

The N-terminal 17 residues, 1–17, are a transit peptide targeting the mitochondrion; that stretch reads IGAGVSGLLGFATVASA. Over 18-221 the chain is Mitochondrial intermembrane; that stretch reads DEAEHGLECP…AAEPEMEERK (204 aa). One can recognise a Cytochrome c domain in the interval 43–150; that stretch reads ASIRRGHQVY…NGQNYVFALL (108 aa). The heme c site is built by Cys56, Cys59, His60, and Met179. Residues 222–241 traverse the membrane as a helical segment; it reads LMGFKWIFVLSLALLQAAYY. The Mitochondrial matrix segment spans residues 242 to 260; the sequence is RRLRWSVLKSRKLVLDVVN.

Belongs to the cytochrome c family. As to quaternary structure, component of the ubiquinol-cytochrome c oxidoreductase (cytochrome b-c1 complex, complex III, CIII), a multisubunit enzyme composed of 3 respiratory subunits cytochrome b, cytochrome c1 and Rieske protein, 2 core protein subunits, and additional low-molecular weight protein subunits. The complex exists as an obligatory dimer and forms supercomplexes (SCs) in the inner mitochondrial membrane with cytochrome c oxidase (complex IV, CIV). It depends on heme c as a cofactor. As to expression, in all tissues analyzed.

The protein resides in the mitochondrion inner membrane. The enzyme catalyses a quinol + 2 Fe(III)-[cytochrome c](out) = a quinone + 2 Fe(II)-[cytochrome c](out) + 2 H(+)(out). Component of the ubiquinol-cytochrome c oxidoreductase, a multisubunit transmembrane complex that is part of the mitochondrial electron transport chain which drives oxidative phosphorylation. The respiratory chain contains 3 multisubunit complexes succinate dehydrogenase (complex II, CII), ubiquinol-cytochrome c oxidoreductase (cytochrome b-c1 complex, complex III, CIII) and cytochrome c oxidase (complex IV, CIV), that cooperate to transfer electrons derived from NADH and succinate to molecular oxygen, creating an electrochemical gradient over the inner membrane that drives transmembrane transport and the ATP synthase. The cytochrome b-c1 complex catalyzes electron transfer from ubiquinol to cytochrome c, linking this redox reaction to translocation of protons across the mitochondrial inner membrane, with protons being carried across the membrane as hydrogens on the quinol. In the process called Q cycle, 2 protons are consumed from the matrix, 4 protons are released into the intermembrane space and 2 electrons are passed to cytochrome c. Cytochrome c1 is a catalytic core subunit containing a c-type heme. It transfers electrons from the [2Fe-2S] iron-sulfur cluster of the Rieske protein to cytochrome c. The chain is Cytochrome c1-2, heme protein, mitochondrial (CYCL) from Solanum tuberosum (Potato).